The sequence spans 504 residues: Glucose-6-phosphate isomerase (504 aa).

The active-site Proton donor is glutamate 333. Residues histidine 364 and lysine 473 contribute to the active site.

This sequence belongs to the GPI family.

It is found in the cytoplasm. The enzyme catalyses alpha-D-glucose 6-phosphate = beta-D-fructose 6-phosphate. It functions in the pathway carbohydrate biosynthesis; gluconeogenesis. The protein operates within carbohydrate degradation; glycolysis; D-glyceraldehyde 3-phosphate and glycerone phosphate from D-glucose: step 2/4. In terms of biological role, catalyzes the reversible isomerization of glucose-6-phosphate to fructose-6-phosphate. This Xanthomonas oryzae pv. oryzae (strain MAFF 311018) protein is Glucose-6-phosphate isomerase.